The primary structure comprises 695 residues: Testis-specific Y-encoded-like protein 2 (695 aa).

Positions 1–56 are disordered; that stretch reads MDRPDEGPPAKTRRLSSSESPQRDPPPPPPPPPLLRLPLPPPQQRPRLQEETEAAQ. Lys-11 participates in a covalent cross-link: Glycyl lysine isopeptide (Lys-Gly) (interchain with G-Cter in SUMO2). Phosphoserine occurs at positions 18 and 20. The span at 23–44 shows a compositional bias: pro residues; that stretch reads RDPPPPPPPPPLLRLPLPPPQQ. Glycyl lysine isopeptide (Lys-Gly) (interchain with G-Cter in SUMO2) cross-links involve residues Lys-163 and Lys-165. Positions 175–207 are disordered; that stretch reads EDEDEQESMRSSRRRRRRRRRKQRKVKRESRQR. The segment covering 185–202 has biased composition (basic residues); that stretch reads SSRRRRRRRRRKQRKVKR. Thr-340 is subject to Phosphothreonine. Disordered stretches follow at residues 471–603 and 632–695; these read DINE…RDIE and VEEE…GKTG. Residues 481–491 show a composition bias toward basic and acidic residues; sequence SPDHDEVRNET. Residues 496 to 518 are compositionally biased toward acidic residues; that stretch reads ESADDNETTDNNESADDNNENPE. The span at 519-535 shows a compositional bias: basic and acidic residues; it reads DNNKNADDNKENPDNNK. Low complexity predominate over residues 539-557; the sequence is GNNFFNGGFWGSHGNNQDS. Acidic residues-rich tracts occupy residues 558–601 and 632–677; these read SDSD…DDRD and VEEE…DLED. Phosphoserine is present on residues Ser-670 and Ser-673.

The protein belongs to the nucleosome assembly protein (NAP) family. In terms of assembly, interacts with histones. Interacts with CASK. Part of a complex containing CASK, TBR1 and TSPYL2. In terms of processing, phosphorylation at Ser-20 and/or Thr-340 impairs function on cell proliferation. As to expression, ubiquitously expressed, with highest levels in testis, adrenal gland, cerebral cortex, ovary, skeletal muscle and spleen. Present in testis, adrenal gland, cerebral cortex and ovary (at protein level).

The protein localises to the nucleus. It localises to the cytoplasm. Part of the CASK/TBR1/TSPYL2 transcriptional complex which modulates gene expression in response to neuronal synaptic activity, probably by facilitating nucleosome assembly. May inhibit cell proliferation by inducing p53-dependent CDKN1A expression. The sequence is that of Testis-specific Y-encoded-like protein 2 (TSPYL2) from Macaca fascicularis (Crab-eating macaque).